Reading from the N-terminus, the 242-residue chain is Protein GrpE (242 aa).

Disordered regions lie at residues 1–75 (MSDD…DDEL) and 93–136 (VADL…QQIK). Residues 23–37 (DAESSAAEDASAADD) are compositionally biased toward low complexity. Over residues 38 to 49 (AAPEESTGDEQA) the composition is skewed to acidic residues. Residues 50-64 (GETTAESSDAESVTV) are compositionally biased toward polar residues. The span at 96–108 (LETERDEAEETAS) shows a compositional bias: acidic residues. The span at 124–133 (YKKRAKKRQQ) shows a compositional bias: basic residues.

It belongs to the GrpE family. Homodimer.

Its subcellular location is the cytoplasm. Its function is as follows. Participates actively in the response to hyperosmotic and heat shock by preventing the aggregation of stress-denatured proteins, in association with DnaK and GrpE. It is the nucleotide exchange factor for DnaK and may function as a thermosensor. Unfolded proteins bind initially to DnaJ; upon interaction with the DnaJ-bound protein, DnaK hydrolyzes its bound ATP, resulting in the formation of a stable complex. GrpE releases ADP from DnaK; ATP binding to DnaK triggers the release of the substrate protein, thus completing the reaction cycle. Several rounds of ATP-dependent interactions between DnaJ, DnaK and GrpE are required for fully efficient folding. In Haloferax mediterranei (strain ATCC 33500 / DSM 1411 / JCM 8866 / NBRC 14739 / NCIMB 2177 / R-4) (Halobacterium mediterranei), this protein is Protein GrpE.